The primary structure comprises 353 residues: Ferredoxin--NADP reductase 1 (353 aa).

FAD-binding residues include Thr-14, Asp-33, Gln-41, Tyr-46, Ala-86, Phe-121, Asp-289, and Thr-330.

The protein belongs to the ferredoxin--NADP reductase type 2 family. Homodimer. Requires FAD as cofactor.

It catalyses the reaction 2 reduced [2Fe-2S]-[ferredoxin] + NADP(+) + H(+) = 2 oxidized [2Fe-2S]-[ferredoxin] + NADPH. The protein is Ferredoxin--NADP reductase 1 of Christiangramia forsetii (strain DSM 17595 / CGMCC 1.15422 / KT0803) (Gramella forsetii).